The primary structure comprises 99 residues: MRVYTIRDDRIVYLGEYELVPMPKLEDDIAAIKGSIIAYVLNSNYSSFIGALKDTKEMELIENLAYELHQNIDRTPTLTRYYYLLMKVYGMHGSILSQF.

This is an uncharacterized protein from Thermoproteus tenax virus 1 (strain KRA1) (TTV1).